The primary structure comprises 284 residues: Flavin-dependent thymidylate synthase (284 aa).

The 211-residue stretch at 27–237 (GFIRVVDYMG…PLAYNAFVEY (211 aa)) folds into the ThyX domain. Residues T73, 96-98 (RHR), and E104 contribute to the FAD site. DUMP is bound by residues 93-96 (QWIR) and 104-108 (EYSAR). A ThyX motif motif is present at residues 96-106 (RHRTANVNEYS). The disordered stretch occupies residues 122–142 (EQVAKQSDNNKQGSGEAFDPD). Positions 125–134 (AKQSDNNKQG) are enriched in polar residues. A dUMP-binding site is contributed by R176. FAD is bound by residues 192 to 194 (DLH) and H198. R203 is a binding site for dUMP. Residue R203 is the Involved in ionization of N3 of dUMP, leading to its activation of the active site.

The protein belongs to the thymidylate synthase ThyX family. In terms of assembly, homotetramer. FAD serves as cofactor.

It carries out the reaction dUMP + (6R)-5,10-methylene-5,6,7,8-tetrahydrofolate + NADPH + H(+) = dTMP + (6S)-5,6,7,8-tetrahydrofolate + NADP(+). Its pathway is pyrimidine metabolism; dTTP biosynthesis. Functionally, catalyzes the reductive methylation of 2'-deoxyuridine-5'-monophosphate (dUMP) to 2'-deoxythymidine-5'-monophosphate (dTMP) while utilizing 5,10-methylenetetrahydrofolate (mTHF) as the methyl donor, and NADPH and FADH(2) as the reductant. The sequence is that of Flavin-dependent thymidylate synthase from Wolbachia pipientis wMel.